A 352-amino-acid polypeptide reads, in one-letter code: Peptide chain release factor 1 (352 aa).

Gln233 bears the N5-methylglutamine mark. The segment at 288 to 309 (NAKDRKEQVGSGDRSERIRTYN) is disordered. Over residues 289-306 (AKDRKEQVGSGDRSERIR) the composition is skewed to basic and acidic residues.

The protein belongs to the prokaryotic/mitochondrial release factor family. Post-translationally, methylated by PrmC. Methylation increases the termination efficiency of RF1.

It localises to the cytoplasm. Its function is as follows. Peptide chain release factor 1 directs the termination of translation in response to the peptide chain termination codons UAG and UAA. This chain is Peptide chain release factor 1, found in Helicobacter pylori (strain Shi470).